The chain runs to 263 residues: Polyglutamine-binding protein 1 (263 aa).

A WW domain is found at 46-80 (EGLPPSWYKVFDPSCGLPYYWNVETDLVSWLSPHD). Residues 94 to 263 (NSNADAEDKS…AEASRSKQQD (170 aa)) are disordered. Basic and acidic residues predominate over residues 99-173 (AEDKSERNLE…DKADREDGKD (75 aa)). One copy of the 1-1; approximate repeat lies at 104–110 (ERNLEKV). The 5 X 7 AA approximate tandem repeats of D-R-[NS]-H-E-K-S stretch occupies residues 104-138 (ERNLEKVDRNHEKSDRSHEKPDRSHEKADRNHEKS). Residues 111-117 (DRNHEKS) form a 1-2 repeat. A 1-3; approximate repeat occupies 118-124 (DRSHEKP). Residues 125 to 131 (DRSHEKA) form a 1-4; approximate repeat. 10 repeat units span residues 132–138 (DRNHEKS), 139–140 (DR), 141–142 (ER), 143–144 (ER), 150–151 (DR), 152–153 (ER), 154–155 (DR), 156–157 (DR), 158–159 (ER), and 160–161 (ER). The interval 139 to 144 (DRERER) is 3 X 2 AA tandem repeats of [DE]-R. Residues 150–161 (DRERDRDRERER) are 6 X 2 AA tandem repeats of [DE]-R. Positions 243-253 (YPSPGAVLRAN) are important for interaction with TXNL4A. S245 is modified (phosphoserine).

Interacts with POU3F2/Brn-2, ATXN1, TXNL4A, HTT and AR. Interaction with ATXN1 correlates positively with the length of the polyglutamine tract. Interacts with RNA polymerase II large subunit in a phosphorylation-dependent manner. Forms a ternary complex with ATXN1 mutant and phosphorylated RNA polymerase II. Interacts (via C-terminus) with TXNL4A and CD2BP2. Interacts (via WW domain) with ATN1 and SF3B1, and may interact with additional splice factors. Interacts (via WW domain) with WBP11; Leading to reduce interaction between PQBP1 and TXNL4A. Interacts with CAPRIN1. Interacts with DDX1. Interacts with SFPQ. Interacts with KHSRP.

The protein resides in the nucleus. The protein localises to the nucleus speckle. It localises to the cytoplasmic granule. Intrinsically disordered protein that acts as a scaffold, and which is involved in different processes, such as pre-mRNA splicing, transcription regulation, innate immunity and neuron development. Interacts with splicing-related factors via the intrinsically disordered region and regulates alternative splicing of target pre-mRNA species. May suppress the ability of POU3F2 to transactivate the DRD1 gene in a POU3F2 dependent manner. Can activate transcription directly or via association with the transcription machinery. May be involved in ATXN1 mutant-induced cell death. The interaction with ATXN1 mutant reduces levels of phosphorylated RNA polymerase II large subunit. Involved in the assembly of cytoplasmic stress granule, possibly by participating in the transport of neuronal RNA granules. Also acts as an innate immune sensor of infection by retroviruses, by detecting the presence of reverse-transcribed DNA in the cytosol. Directly binds retroviral reverse-transcribed DNA in the cytosol and interacts with CGAS, leading to activate the cGAS-STING signaling pathway, triggering type-I interferon production. This Rattus norvegicus (Rat) protein is Polyglutamine-binding protein 1 (Pqbp1).